A 453-amino-acid polypeptide reads, in one-letter code: MFDNLTDRLSRTLRNISGRGRLTEDNVKDTLREVRMALLEADVALPVVREFINRVKEKAVGHEVNKSLTPGQEFVKIVRNELVAAMGEENQTLNLAAQPPAVVLMAGLQGAGKTTSVGKLGKFLREKHKKKVLVVSADVYRPAAIKQLETLAEQVGVDFFPSDVGQKPVDIVNAALKEAKLKFYDVLLVDTAGRLHVDEAMMDEIKQVHASINPVETLFVVDAMTGQDAANTAKAFNEALPLTGVVLTKVDGDARGGAALSIRHITGKPIKFLGVGEKTEALEPFHPDRIASRILGMGDVLSLIEDIESKVDRAQAEKLASKLKKGDGFDLNDFLEQLRQMKNMGGMASLMGKLPGMGQIPDNVKSQMDDKVLVRMEAIINSMTMKERAKPEIIKGSRKRRIAAGCGMQVQDVNRLLKQFDDMQRMMKKMKKGGMAKMMRSMKGMMPPGFPGR.

Residues 107 to 114 (GLQGAGKT), 190 to 194 (DTAGR), and 248 to 251 (TKVD) each bind GTP.

It belongs to the GTP-binding SRP family. SRP54 subfamily. Part of the signal recognition particle protein translocation system, which is composed of SRP and FtsY. SRP is a ribonucleoprotein composed of Ffh and a 4.5S RNA molecule.

Its subcellular location is the cytoplasm. It carries out the reaction GTP + H2O = GDP + phosphate + H(+). In terms of biological role, involved in targeting and insertion of nascent membrane proteins into the cytoplasmic membrane. Binds to the hydrophobic signal sequence of the ribosome-nascent chain (RNC) as it emerges from the ribosomes. The SRP-RNC complex is then targeted to the cytoplasmic membrane where it interacts with the SRP receptor FtsY. Interaction with FtsY leads to the transfer of the RNC complex to the Sec translocase for insertion into the membrane, the hydrolysis of GTP by both Ffh and FtsY, and the dissociation of the SRP-FtsY complex into the individual components. This is Signal recognition particle protein from Escherichia coli O157:H7.